The following is a 244-amino-acid chain: Transcription factor Sox-12 (244 aa).

The disordered stretch occupies residues 1–22 (MVQNKTTGSCPKPTEVAPGGPS). A DNA-binding region (HMG box) is located at residues 31–99 (IKRPMNAFMV…KHMADYPNYK (69 aa)). 2 disordered regions span residues 101-137 (RPRR…QMDT) and 152-193 (GDQV…HEGL). Composition is skewed to polar residues over residues 120 to 137 (STAT…QMDT) and 176 to 186 (HTKTVPSSPQS).

In terms of tissue distribution, expressed at a low level in embryos, and in the adult lung, ovary, skeletal muscle, testis, brain and heart.

The protein resides in the nucleus. Transcription factor that binds to the sequence 5'-AACAAT-3'. Acts as a transcriptional activator. This is Transcription factor Sox-12 (sox12) from Xenopus laevis (African clawed frog).